The following is an 891-amino-acid chain: Microtubule-associated protein 10 (891 aa).

4 disordered regions span residues 325–355, 401–457, 504–679, and 702–844; these read AAVQ…PPQI, EDKG…VTKG, SWKG…KSSC, and TTEN…SNLS. A compositionally biased stretch (low complexity) spans 407–417; sequence PSTKSTSPSES. Polar residues-rich tracts occupy residues 509–520 and 527–544; these read VSSSAAESQMSP and PTDS…SQLP. Basic and acidic residues-rich tracts occupy residues 577–592 and 645–658; these read STTK…KQEM and TVDK…DGRQ. Polar residues-rich tracts occupy residues 665-679, 702-718, 726-749, 776-790, and 826-844; these read ADTS…KSSC, TTEN…SSTG, SRAS…SSVL, EASS…SQWT, and KSQS…SNLS.

In terms of assembly, interacts (via middle region) with microtubules.

Its subcellular location is the cytoplasm. It localises to the cytoskeleton. It is found in the spindle pole. The protein localises to the microtubule organizing center. The protein resides in the centrosome. Its subcellular location is the midbody. Microtubule-associated protein (MAP) that plays a role in the regulation of cell division; promotes microtubule stability and participates in the organization of the spindle midzone and normal progress of cytokinesis. In Mus musculus (Mouse), this protein is Microtubule-associated protein 10 (Map10).